Consider the following 307-residue polypeptide: MKDESSFFTIDHIIELENGQSIRVWETPPKSDTHKKNSTIVIAAGFARRMDHFAGLAEYLSSNGFRVIRYDSLHHVGLSSGQIDEFSMSIGKHSLLIVVGWLRAKGIQNLGIIAASLSARIAYEVINDIDASFLITAVGVVNLQDTLEKALKYDYLRLPIDELPDDLDFEGHNLGSKVFVTDCLKNEWDTLGSTFKAVQGLNIPFIAFTANGDSWVNQSDVEKMIDNIDTTQCKLYSLIGSSHDLGENLVVLRNFYESVTRAAVALDKGSLDLDIEIVEPGFEDLTSTTVKERRLRNKIENELLELA.

Residues serine 116, aspartate 213, and histidine 243 each act as charge relay system in the active site.

It belongs to the LuxD family.

The protein operates within lipid metabolism; fatty acid reduction for biolumincescence. Functionally, acyl transferase is part of the fatty acid reductase system required for aldehyde biosynthesis; it produces fatty acids for the luminescent reaction. This is Acyl transferase from Aliivibrio fischeri (strain ATCC 700601 / ES114) (Vibrio fischeri).